A 444-amino-acid chain; its full sequence is NEDD8-activating enzyme E1 catalytic subunit (444 aa).

An ATP-binding site is contributed by 54-78; it reads GLGCEILKDLALSGFRDLSVIDMDT. Cys-205 functions as the Glycyl thioester intermediate in the catalytic mechanism.

The protein belongs to the ubiquitin-activating E1 family. UBA3 subfamily. Heterodimer of uba3 and ula1. Interacts with NEDD8 and ubc12. Interacts with but1 and but2.

It carries out the reaction ATP + [NEDD8 protein] + [E1 NEDD8-activating enzyme]-L-cysteine = AMP + diphosphate + [E1 NEDD8-activating enzyme]-S-[NEDD8 protein]-yl-L-cysteine.. Its pathway is protein modification; protein neddylation. Functionally, catalytic subunit of the dimeric uba3-ula1 E1 enzyme. E1 activates NEDD8/ubl1 by first adenylating its C-terminal glycine residue with ATP, thereafter linking this residue to the side chain of the catalytic cysteine, yielding a NEDD8-uba3 thioester and free AMP. E1 finally transfers NEDD8 to the catalytic cysteine of ubc12. This is NEDD8-activating enzyme E1 catalytic subunit (uba3) from Schizosaccharomyces pombe (strain 972 / ATCC 24843) (Fission yeast).